Consider the following 164-residue polypeptide: Endoribonuclease YbeY (164 aa).

Zn(2+) contacts are provided by His125, His129, and His135.

This sequence belongs to the endoribonuclease YbeY family. The cofactor is Zn(2+).

The protein resides in the cytoplasm. Its function is as follows. Single strand-specific metallo-endoribonuclease involved in late-stage 70S ribosome quality control and in maturation of the 3' terminus of the 16S rRNA. This is Endoribonuclease YbeY from Paramagnetospirillum magneticum (strain ATCC 700264 / AMB-1) (Magnetospirillum magneticum).